Consider the following 349-residue polypeptide: Anthranilate phosphoribosyltransferase (349 aa).

5-phospho-alpha-D-ribose 1-diphosphate contacts are provided by residues glycine 82, 85-86, 92-95, 110-118, and serine 122; these read GD, NVST, and KHGNRAVSG. Position 82 (glycine 82) interacts with anthranilate. Serine 94 provides a ligand contact to Mg(2+). Asparagine 113 provides a ligand contact to anthranilate. Arginine 168 is a binding site for anthranilate. The Mg(2+) site is built by aspartate 227 and glutamate 228.

Belongs to the anthranilate phosphoribosyltransferase family. Homodimer. Mg(2+) is required as a cofactor.

It carries out the reaction N-(5-phospho-beta-D-ribosyl)anthranilate + diphosphate = 5-phospho-alpha-D-ribose 1-diphosphate + anthranilate. The protein operates within amino-acid biosynthesis; L-tryptophan biosynthesis; L-tryptophan from chorismate: step 2/5. Functionally, catalyzes the transfer of the phosphoribosyl group of 5-phosphorylribose-1-pyrophosphate (PRPP) to anthranilate to yield N-(5'-phosphoribosyl)-anthranilate (PRA). This Pseudomonas syringae pv. tomato (strain ATCC BAA-871 / DC3000) protein is Anthranilate phosphoribosyltransferase.